The following is a 138-amino-acid chain: Transmembrane protein 170A (138 aa).

Topologically, residues 1-44 (MEGSEAGGGGLLQQILSLRLVPRVGNGTTYSSPLSTFPEMWYGV) are lumenal. Asn26 carries an N-linked (GlcNAc...) asparagine glycan. Residues 45-65 (FLWALVSSLSFHVPAALLALF) form a helical membrane-spanning segment. Over 66-79 (TLRHHKYGRFMSVS) the chain is Cytoplasmic. A helical membrane pass occupies residues 80-100 (LLLMGIVGPITAGILTSAAIA). Over 101-110 (GVYRAAGKKM) the chain is Lumenal. Residues 111–131 (IPFEALIFEVGQTFCVVVVSF) traverse the membrane as a helical segment. Residues 132–138 (LRILATL) lie on the Cytoplasmic side of the membrane.

The protein belongs to the TMEM170 family.

It is found in the endoplasmic reticulum membrane. The protein localises to the nucleus envelope. May regulate membrane morphogenesis in the endoplasmic reticulum (ER) by promoting ER sheet formation at the expense of ER tubules. This is Transmembrane protein 170A (TMEM170A) from Gallus gallus (Chicken).